We begin with the raw amino-acid sequence, 598 residues long: Elongation factor 4 (598 aa).

Residues 2 to 184 (KNIRNFSIIA…EIVHKIPAPE (183 aa)) enclose the tr-type G domain. Residues 14-19 (DHGKST) and 131-134 (NKID) contribute to the GTP site.

This sequence belongs to the TRAFAC class translation factor GTPase superfamily. Classic translation factor GTPase family. LepA subfamily.

The protein localises to the cell inner membrane. It catalyses the reaction GTP + H2O = GDP + phosphate + H(+). Its function is as follows. Required for accurate and efficient protein synthesis under certain stress conditions. May act as a fidelity factor of the translation reaction, by catalyzing a one-codon backward translocation of tRNAs on improperly translocated ribosomes. Back-translocation proceeds from a post-translocation (POST) complex to a pre-translocation (PRE) complex, thus giving elongation factor G a second chance to translocate the tRNAs correctly. Binds to ribosomes in a GTP-dependent manner. This is Elongation factor 4 from Pasteurella multocida (strain Pm70).